Reading from the N-terminus, the 50-residue chain is Small ribosomal subunit protein uS14 (50 aa).

Zn(2+)-binding residues include Cys-15, Cys-18, Cys-33, and Cys-36.

The protein belongs to the universal ribosomal protein uS14 family. Zinc-binding uS14 subfamily. In terms of assembly, part of the 30S ribosomal subunit. Zn(2+) is required as a cofactor.

Functionally, binds 16S rRNA, required for the assembly of 30S particles. In Methanosarcina barkeri (strain Fusaro / DSM 804), this protein is Small ribosomal subunit protein uS14.